A 79-amino-acid chain; its full sequence is Protein OPG081 (79 aa).

The Intravirion portion of the chain corresponds to Val2–Leu8. Residues Thr9 to Val29 form a helical membrane-spanning segment. Topologically, residues Lys30 to Arg47 are virion surface. The chain crosses the membrane as a helical span at residues Thr48 to Tyr68. Residues Ala69–Asn79 are Intravirion-facing.

This sequence belongs to the orthopoxvirus OPG081 family.

The protein localises to the virion membrane. In terms of biological role, envelope protein. The sequence is that of Protein OPG081 (OPG081) from Cynomys gunnisoni (Gunnison's prairie dog).